The sequence spans 71 residues: Palustrin-Ca (71 aa).

The first 22 residues, 1–22, serve as a signal peptide directing secretion; that stretch reads MFTLKKSLLLLFFLGTISLSLC. The propeptide occupies 23–40; it reads EQERDADGDEGEVEEVKR. C63 and C69 are oxidised to a cystine.

The protein belongs to the frog skin active peptide (FSAP) family. Brevinin subfamily. In terms of tissue distribution, expressed by the skin glands.

The protein resides in the secreted. The protein localises to the target cell membrane. Antibacterial peptide with amphipathic alpha-helical structure that exhibits potent broad-spectrum activity against Gram-positive and -negative bacteria. It is active against Listeria ATCC 54004 (MIC=30 ug/ml), S.aureus ATCC 25923 (MIC=7.8 ug/ml), S.suis 2 CVCC 606 (MIC=31.25 ug/ml), B.subtilis ADB403 (30 ug/ml), K.pneumoniae ATCC 700603 (MIC=60 ug/ml) and P.aeruginosa ATCC 227853 (MIC=30 ug/ml). Does not show activity against Salmonella ATCC 20020 and the fungus Candida albicans. Is also cytotoxic to HeLa cells at high concentrations. In addition, shows a strong antitumor activity but only a little hemolytic activity. Despite the presence of a Gly residue at position 10, this alpha-helical peptide remains relatively rigid, not exhibiting any significant flexibility during the molecular dynamics simulation. The peptide shows a preference for a position parallel to the target membrane that suggests it exerts its antimicrobial activity through a non-pore-forming mechanism of action, such as the carpet model or the interfacial activity model. In Aquarana catesbeiana (American bullfrog), this protein is Palustrin-Ca.